The sequence spans 136 residues: Small ribosomal subunit protein uS9 (136 aa).

The protein belongs to the universal ribosomal protein uS9 family.

The chain is Small ribosomal subunit protein uS9 from Borrelia turicatae (strain 91E135).